Here is a 365-residue protein sequence, read N- to C-terminus: Flagellar P-ring protein (365 aa).

The N-terminal stretch at 1–20 is a signal peptide; it reads MKLPHFFVLAALVLSGAAHA.

This sequence belongs to the FlgI family. As to quaternary structure, the basal body constitutes a major portion of the flagellar organelle and consists of four rings (L,P,S, and M) mounted on a central rod.

Its subcellular location is the periplasm. The protein localises to the bacterial flagellum basal body. Its function is as follows. Assembles around the rod to form the L-ring and probably protects the motor/basal body from shearing forces during rotation. The chain is Flagellar P-ring protein from Thiobacillus denitrificans (strain ATCC 25259 / T1).